The sequence spans 378 residues: Alcohol dehydrogenase (378 aa).

4 residues coordinate Fe cation: aspartate 195, histidine 199, histidine 262, and histidine 274.

The protein belongs to the iron-containing alcohol dehydrogenase family. Fe(2+) serves as cofactor. The cofactor is Mn(2+).

It carries out the reaction a primary alcohol + NAD(+) = an aldehyde + NADH + H(+). The catalysed reaction is butan-1-ol + NAD(+) = butanal + NADH + H(+). It catalyses the reaction hexan-1-ol + NAD(+) = hexanal + NADH + H(+). The enzyme catalyses ethanol + NAD(+) = acetaldehyde + NADH + H(+). Functionally, thermostable type III alcohol dehydrogenase. For oxidation activity, the best substrates are 1-butanol and 1-hexanol, followed by ethanol. Shows lower activity with ethylene glycol, isopentanol, isopropanol and glycerol. Displays higher reduction activity in the presence of butanal, followed by acetaldehyde. Has lower activity with hexanal and acetone. The sequence is that of Alcohol dehydrogenase from Thermococcus barophilus.